Here is a 418-residue protein sequence, read N- to C-terminus: UDP-glucuronic acid decarboxylase 1 (418 aa).

At Met1–Lys17 the chain is on the cytoplasmic side. Residues Ile18–Met38 traverse the membrane as a helical; Signal-anchor for type II membrane protein segment. Residues Arg39–Asn418 lie on the Lumenal side of the membrane. The NAD(+) site is built by Gly96, Phe97, Val98, Asp117, Asn118, Phe120, Thr121, Gly122, Asp142, and Val143. UDP-alpha-D-glucuronate is bound by residues Leu147 and Tyr148. Positions 157 and 159 each coordinate NAD(+). Lys175 contributes to the UDP-alpha-D-glucuronate binding site. Thr176 serves as a coordination point for NAD(+). UDP-alpha-D-glucuronate is bound by residues Asn183, Gly186, Lys189, and Arg190. NAD(+) is bound by residues Ala198, Tyr229, and Lys233. The active-site Proton acceptor is the Tyr229. UDP-alpha-D-glucuronate-binding residues include Tyr243, Gln246, and Glu247. NAD(+) contacts are provided by Thr259, His265, and Arg270. Residues Asn314 and Asn383 are each glycosylated (N-linked (GlcNAc...) asparagine). The segment at Ala397–Asn418 is disordered. A compositionally biased stretch (basic residues) spans Lys406 to Asn418.

It belongs to the NAD(P)-dependent epimerase/dehydratase family. UDP-glucuronic acid decarboxylase subfamily. As to quaternary structure, homodimer and homotetramer. NAD(+) serves as cofactor.

Its subcellular location is the golgi apparatus. It localises to the golgi stack membrane. The enzyme catalyses UDP-alpha-D-glucuronate + H(+) = UDP-alpha-D-xylose + CO2. Its pathway is nucleotide-sugar biosynthesis; UDP-alpha-D-xylose biosynthesis; UDP-alpha-D-xylose from UDP-alpha-D-glucuronate: step 1/1. Catalyzes the NAD-dependent decarboxylation of UDP-glucuronic acid to UDP-xylose. Necessary for the biosynthesis of the core tetrasaccharide in glycosaminoglycan biosynthesis. Essential during embryogenesis for craniofacial development. The sequence is that of UDP-glucuronic acid decarboxylase 1 from Danio rerio (Zebrafish).